The chain runs to 248 residues: 4-hydroxy-tetrahydrodipicolinate reductase (248 aa).

Residues 8–13, 75–77, and 99–102 contribute to the NAD(+) site; these read GAKGRM, GTT, and ATNM. H131 functions as the Proton donor/acceptor in the catalytic mechanism. H132 provides a ligand contact to (S)-2,3,4,5-tetrahydrodipicolinate. The Proton donor role is filled by K135. 141-142 lines the (S)-2,3,4,5-tetrahydrodipicolinate pocket; it reads GT.

Belongs to the DapB family.

Its subcellular location is the cytoplasm. It catalyses the reaction (S)-2,3,4,5-tetrahydrodipicolinate + NAD(+) + H2O = (2S,4S)-4-hydroxy-2,3,4,5-tetrahydrodipicolinate + NADH + H(+). The catalysed reaction is (S)-2,3,4,5-tetrahydrodipicolinate + NADP(+) + H2O = (2S,4S)-4-hydroxy-2,3,4,5-tetrahydrodipicolinate + NADPH + H(+). It participates in amino-acid biosynthesis; L-lysine biosynthesis via DAP pathway; (S)-tetrahydrodipicolinate from L-aspartate: step 4/4. Functionally, catalyzes the conversion of 4-hydroxy-tetrahydrodipicolinate (HTPA) to tetrahydrodipicolinate. This Campylobacter jejuni subsp. doylei (strain ATCC BAA-1458 / RM4099 / 269.97) protein is 4-hydroxy-tetrahydrodipicolinate reductase.